Consider the following 275-residue polypeptide: Large ribosomal subunit protein uL2 (275 aa).

Disordered regions lie at residues 28-48 (KPYA…NNGR) and 223-275 (VVMN…RNKK).

This sequence belongs to the universal ribosomal protein uL2 family. In terms of assembly, part of the 50S ribosomal subunit. Forms a bridge to the 30S subunit in the 70S ribosome.

Its function is as follows. One of the primary rRNA binding proteins. Required for association of the 30S and 50S subunits to form the 70S ribosome, for tRNA binding and peptide bond formation. It has been suggested to have peptidyltransferase activity; this is somewhat controversial. Makes several contacts with the 16S rRNA in the 70S ribosome. This Photobacterium profundum (strain SS9) protein is Large ribosomal subunit protein uL2.